A 265-amino-acid polypeptide reads, in one-letter code: Transcriptional activator AggR (265 aa).

The HTH araC/xylS-type domain occupies Asp164–Tyr261. 2 consecutive DNA-binding regions (H-T-H motif) follow at residues Ala181–Tyr202 and Ile228–Phe251.

Homodimer.

In terms of biological role, transcriptional activator of aggregative adherence fimbria I expression in enteroaggregative E.coli. This chain is Transcriptional activator AggR (aggR), found in Escherichia coli.